The sequence spans 399 residues: S-adenosylmethionine synthase (399 aa).

Residue histidine 17 participates in ATP binding. Aspartate 19 contacts Mg(2+). Glutamate 45 provides a ligand contact to K(+). Glutamate 58 and glutamine 101 together coordinate L-methionine. The segment at 101–111 (QSADIAMGVDQ) is flexible loop. Residues 177 to 179 (DGK), 244 to 245 (RF), aspartate 253, 259 to 260 (RK), alanine 276, and lysine 280 each bind ATP. L-methionine is bound at residue aspartate 253. Lysine 284 serves as a coordination point for L-methionine.

The protein belongs to the AdoMet synthase family. In terms of assembly, homotetramer; dimer of dimers. Requires Mg(2+) as cofactor. It depends on K(+) as a cofactor.

The protein localises to the cytoplasm. It carries out the reaction L-methionine + ATP + H2O = S-adenosyl-L-methionine + phosphate + diphosphate. Its pathway is amino-acid biosynthesis; S-adenosyl-L-methionine biosynthesis; S-adenosyl-L-methionine from L-methionine: step 1/1. Catalyzes the formation of S-adenosylmethionine (AdoMet) from methionine and ATP. The overall synthetic reaction is composed of two sequential steps, AdoMet formation and the subsequent tripolyphosphate hydrolysis which occurs prior to release of AdoMet from the enzyme. The polypeptide is S-adenosylmethionine synthase (Bacillus cereus (strain ATCC 10987 / NRS 248)).